The primary structure comprises 103 residues: Cell division protein FtsB (103 aa).

Residues 1 to 3 are Cytoplasmic-facing; it reads MGK. The helical transmembrane segment at 4 to 21 threads the bilayer; sequence LTLLLLALLVWLQYSLWF. The Periplasmic segment spans residues 22–103; sequence GKNGIHDYSR…RAGGPAQNNR (82 aa). The stretch at 38–62 forms a coiled coil; it reads VQQATNAKLKARNDQLFAEIDDLNG.

It belongs to the FtsB family. As to quaternary structure, part of a complex composed of FtsB, FtsL and FtsQ.

The protein localises to the cell inner membrane. In terms of biological role, essential cell division protein. May link together the upstream cell division proteins, which are predominantly cytoplasmic, with the downstream cell division proteins, which are predominantly periplasmic. The protein is Cell division protein FtsB of Cronobacter sakazakii (strain ATCC BAA-894) (Enterobacter sakazakii).